Consider the following 320-residue polypeptide: Acetyl-coenzyme A carboxylase carboxyl transferase subunit alpha (320 aa).

Residues 41–295 (RIEEKAGQAL…GEAIAQAFDE (255 aa)) enclose the CoA carboxyltransferase C-terminal domain.

Belongs to the AccA family. Acetyl-CoA carboxylase is a heterohexamer composed of biotin carboxyl carrier protein (AccB), biotin carboxylase (AccC) and two subunits each of ACCase subunit alpha (AccA) and ACCase subunit beta (AccD).

Its subcellular location is the cytoplasm. It carries out the reaction N(6)-carboxybiotinyl-L-lysyl-[protein] + acetyl-CoA = N(6)-biotinyl-L-lysyl-[protein] + malonyl-CoA. It participates in lipid metabolism; malonyl-CoA biosynthesis; malonyl-CoA from acetyl-CoA: step 1/1. Component of the acetyl coenzyme A carboxylase (ACC) complex. First, biotin carboxylase catalyzes the carboxylation of biotin on its carrier protein (BCCP) and then the CO(2) group is transferred by the carboxyltransferase to acetyl-CoA to form malonyl-CoA. The protein is Acetyl-coenzyme A carboxylase carboxyl transferase subunit alpha of Bradyrhizobium sp. (strain BTAi1 / ATCC BAA-1182).